The chain runs to 78 residues: Acyl carrier protein (78 aa).

Positions 2–77 constitute a Carrier domain; that stretch reads SNLEERVKKI…AAIDYVTANA (76 aa). An O-(pantetheine 4'-phosphoryl)serine modification is found at S37.

This sequence belongs to the acyl carrier protein (ACP) family. 4'-phosphopantetheine is transferred from CoA to a specific serine of apo-ACP by AcpS. This modification is essential for activity because fatty acids are bound in thioester linkage to the sulfhydryl of the prosthetic group.

It localises to the cytoplasm. The protein operates within lipid metabolism; fatty acid biosynthesis. In terms of biological role, carrier of the growing fatty acid chain in fatty acid biosynthesis. The chain is Acyl carrier protein from Vibrio vulnificus (strain CMCP6).